Reading from the N-terminus, the 403-residue chain is Tryptophan synthase beta chain (403 aa).

K87 bears the N6-(pyridoxal phosphate)lysine mark.

This sequence belongs to the TrpB family. Tetramer of two alpha and two beta chains. Pyridoxal 5'-phosphate serves as cofactor.

The catalysed reaction is (1S,2R)-1-C-(indol-3-yl)glycerol 3-phosphate + L-serine = D-glyceraldehyde 3-phosphate + L-tryptophan + H2O. The protein operates within amino-acid biosynthesis; L-tryptophan biosynthesis; L-tryptophan from chorismate: step 5/5. In terms of biological role, the beta subunit is responsible for the synthesis of L-tryptophan from indole and L-serine. This is Tryptophan synthase beta chain from Shewanella loihica (strain ATCC BAA-1088 / PV-4).